Reading from the N-terminus, the 181-residue chain is Protein Syd (181 aa).

It belongs to the Syd family.

Its subcellular location is the cell inner membrane. Its function is as follows. Interacts with the SecY protein in vivo. May bind preferentially to an uncomplexed state of SecY, thus functioning either as a chelating agent for excess SecY in the cell or as a regulatory factor that negatively controls the translocase function. The protein is Protein Syd of Citrobacter koseri (strain ATCC BAA-895 / CDC 4225-83 / SGSC4696).